The chain runs to 672 residues: UvrABC system protein B (672 aa).

The region spanning 26 to 181 (AGLEDGLAYQ…ILQRLAELQY (156 aa)) is the Helicase ATP-binding domain. 39-46 (GVTGSGKT) lines the ATP pocket. Positions 92 to 115 (YYDYYQPEAYVPSSDTYIEKDASI) match the Beta-hairpin motif. The region spanning 430 to 592 (QVDDLLSEIK…ITPKSIQKAV (163 aa)) is the Helicase C-terminal domain. The UVR domain occupies 631–666 (AKELRKLEEQMYHHARNLEFEEAAAVRDKIQHIRKG).

This sequence belongs to the UvrB family. Forms a heterotetramer with UvrA during the search for lesions. Interacts with UvrC in an incision complex.

The protein localises to the cytoplasm. In terms of biological role, the UvrABC repair system catalyzes the recognition and processing of DNA lesions. A damage recognition complex composed of 2 UvrA and 2 UvrB subunits scans DNA for abnormalities. Upon binding of the UvrA(2)B(2) complex to a putative damaged site, the DNA wraps around one UvrB monomer. DNA wrap is dependent on ATP binding by UvrB and probably causes local melting of the DNA helix, facilitating insertion of UvrB beta-hairpin between the DNA strands. Then UvrB probes one DNA strand for the presence of a lesion. If a lesion is found the UvrA subunits dissociate and the UvrB-DNA preincision complex is formed. This complex is subsequently bound by UvrC and the second UvrB is released. If no lesion is found, the DNA wraps around the other UvrB subunit that will check the other stand for damage. This chain is UvrABC system protein B, found in Coxiella burnetii (strain Dugway 5J108-111).